A 118-amino-acid polypeptide reads, in one-letter code: Fluoride-specific ion channel FluC 1 (118 aa).

2 helical membrane-spanning segments follow: residues 5–25 (FLLVGFGAALGAMLRYGISVL) and 47–67 (FLLGFLVSSALGPVWQLFLGT). Positions 71 and 74 each coordinate Na(+). The helical transmembrane segment at 98–118 (YLGFTYVFGLIAAFLGMMLGV) threads the bilayer.

The protein belongs to the fluoride channel Fluc/FEX (TC 1.A.43) family.

The protein localises to the cell membrane. The catalysed reaction is fluoride(in) = fluoride(out). Na(+) is not transported, but it plays an essential structural role and its presence is essential for fluoride channel function. In terms of biological role, fluoride-specific ion channel. Important for reducing fluoride concentration in the cell, thus reducing its toxicity. The sequence is that of Fluoride-specific ion channel FluC 1 from Listeria monocytogenes serovar 1/2a (strain ATCC BAA-679 / EGD-e).